Here is a 365-residue protein sequence, read N- to C-terminus: Prostaglandin E2 receptor EP3 subtype (365 aa).

The segment at 1 to 22 (MASMWAPEHSAEAHSNLSSTTD) is disordered. Topologically, residues 1-30 (MASMWAPEHSAEAHSNLSSTTDDCGSVSVA) are extracellular. The span at 13-22 (AHSNLSSTTD) shows a compositional bias: polar residues. Asparagine 16 carries an N-linked (GlcNAc...) asparagine glycan. The chain crosses the membrane as a helical span at residues 31 to 55 (FPITMMVTGFVGNALAMLLVSRSYR). Residues 56–68 (RRESKRKKSFLLC) lie on the Cytoplasmic side of the membrane. The chain crosses the membrane as a helical span at residues 69–89 (IGWLALTDLVGQLLTSPVVIL). Topologically, residues 90 to 108 (VYLSQRRWEQLDPSGRLCT) are extracellular. A disulfide bridge links cysteine 107 with cysteine 184. A helical membrane pass occupies residues 109 to 130 (FFGLTMTVFGLSSLLVASAMAV). The Cytoplasmic segment spans residues 131 to 151 (ERALAIRAPHWYASHMKTRAT). Residues 152–173 (PVLLGVWLSVLAFALLPVLGVG) form a helical membrane-spanning segment. Topologically, residues 174-203 (RYSVQWPGTWCFISTGPAGNETDPAREPGS) are extracellular. N-linked (GlcNAc...) asparagine glycosylation is present at asparagine 193. The helical transmembrane segment at 204-229 (VAFASAFACLGLLALVVTFACNLATI) threads the bilayer. Over 230 to 259 (KALVSRCRAKAAVSQSSAQWGRITTETAIQ) the chain is Cytoplasmic. A helical membrane pass occupies residues 260 to 283 (LMGIMCVLSVCWSPLLIMMLKMIF). The Extracellular segment spans residues 284-303 (NQMSVEQCKTQMGKEKECNS). Residues 304–325 (FLIAVRLASLNQILDPWVYLLL) traverse the membrane as a helical segment. At 326–365 (RKILLRKFCQIRDHTNYASSSTSLPCPGSSALMWSDQLER) the chain is on the cytoplasmic side.

This sequence belongs to the G-protein coupled receptor 1 family. Interacts (via C-terminus) with MKLN1. Post-translationally, ligand binding is affected by cAMP-dependent phosphorylation in brain membranes. As to expression, detected in platelets. Kidney, uterus, and mastocytoma cells, and in a lesser amount in brain, thymus, lung, heart, stomach and spleen.

It is found in the cell membrane. In terms of biological role, receptor for prostaglandin E2 (PGE2). Required for normal development of fever in response to pyrinogens, including IL1B, prostaglandin E2 and bacterial lipopolysaccharide (LPS). Required for normal potentiation of platelet aggregation by prostaglandin E2, and thus plays a role in the regulation of blood coagulation. Required for increased HCO3(-) secretion in the duodenum in response to mucosal acidification, and thereby contributes to the protection of the mucosa against acid-induced ulceration. Not required for normal kidney function, normal urine volume and osmolality. Functionally, receptor for prostaglandin E2 (PGE2); ligand binding activates a signaling cascade via G(i) proteins that leads to inhibition of adenylate cyclase. Shows high agonist-independent constitutive inhibition of adenylate cyclase. Receptor for prostaglandin E2 (PGE2); ligand binding activates a signaling cascade via G(i) proteins that leads to inhibition of adenylate cyclase. Requires much higher ligand concentrations than isoform Alpha for activation. Does not display agonist-independent constitutive inhibition of adenylate cyclase. Its function is as follows. Receptor for prostaglandin E2 (PGE2); ligand binding can activate several distinct signaling cascades, resulting in activation or inhibition of adenylate cyclase. This Mus musculus (Mouse) protein is Prostaglandin E2 receptor EP3 subtype (Ptger3).